Reading from the N-terminus, the 188-residue chain is Pro-adrenomedullin (188 aa).

A signal peptide spans 1–21; the sequence is MKLVPVALLYLGSLAFLGVDT. At R41 the chain carries Arginine amide. A propeptide spanning residues 45 to 92 is cleaved from the precursor; sequence ELRESSSYPTGLADVKAGPVQTLIRPQDVKGASRSPQASSPDAARIRV. A disordered region spans residues 69-89; that stretch reads RPQDVKGASRSPQASSPDAAR. C110 and C115 are joined by a disulfide. Residues 129–175 are disordered; the sequence is DKDKDGSAPRSKISPQGYGRRRRRSLPEAGLGRTLLQPPEPKLRGAP. Position 146 is a tyrosine amide (Y146). Positions 153–188 are cleaved as a propeptide — preproAM C-terminal fragment; that stretch reads SLPEAGLGRTLLQPPEPKLRGAPDSRVHQVLATLRI.

This sequence belongs to the adrenomedullin family.

Its subcellular location is the secreted. In terms of biological role, adrenomedullin/ADM and proadrenomedullin N-20 terminal peptide/PAMP are peptide hormones that act as potent hypotensive and vasodilatator agents. Numerous actions have been reported most related to the physiologic control of fluid and electrolyte homeostasis. Its function is as follows. ADM function is mediated by the CALCRL-RAMP2 and CALCRL-RAMP3 receptor complexes with ADM showing the highest potency for the CALCRL-RAMP2 complex. This Bos taurus (Bovine) protein is Pro-adrenomedullin (ADM).